The chain runs to 384 residues: S-adenosylmethionine synthase (384 aa).

Position 15 (H15) interacts with ATP. D17 provides a ligand contact to Mg(2+). E43 is a K(+) binding site. L-methionine is bound by residues E56 and Q99. The tract at residues Q99–K109 is flexible loop. ATP-binding positions include D164 to K166, R230 to F231, D239, R245 to K246, A262, and K266. Residue D239 participates in L-methionine binding. L-methionine is bound at residue K270.

Belongs to the AdoMet synthase family. In terms of assembly, homotetramer; dimer of dimers. The cofactor is Mg(2+). K(+) is required as a cofactor.

Its subcellular location is the cytoplasm. It catalyses the reaction L-methionine + ATP + H2O = S-adenosyl-L-methionine + phosphate + diphosphate. The protein operates within amino-acid biosynthesis; S-adenosyl-L-methionine biosynthesis; S-adenosyl-L-methionine from L-methionine: step 1/1. In terms of biological role, catalyzes the formation of S-adenosylmethionine (AdoMet) from methionine and ATP. The overall synthetic reaction is composed of two sequential steps, AdoMet formation and the subsequent tripolyphosphate hydrolysis which occurs prior to release of AdoMet from the enzyme. The polypeptide is S-adenosylmethionine synthase (Aliivibrio salmonicida (strain LFI1238) (Vibrio salmonicida (strain LFI1238))).